The following is a 416-amino-acid chain: Queuine tRNA-ribosyltransferase accessory subunit 2 (416 aa).

4 residues coordinate Zn(2+): Cys350, Cys352, Cys355, and His381.

This sequence belongs to the queuine tRNA-ribosyltransferase family. QTRT2 subfamily. Heterodimer of a catalytic subunit qtrt1 and an accessory subunit qtrt2. Zn(2+) serves as cofactor.

Its subcellular location is the cytoplasm. It is found in the mitochondrion outer membrane. Non-catalytic subunit of the queuine tRNA-ribosyltransferase (TGT) that catalyzes the base-exchange of a guanine (G) residue with queuine (Q) at position 34 (anticodon wobble position) in tRNAs with GU(N) anticodons (tRNA-Asp, -Asn, -His and -Tyr), resulting in the hypermodified nucleoside queuosine (7-(((4,5-cis-dihydroxy-2-cyclopenten-1-yl)amino)methyl)-7-deazaguanosine). The sequence is that of Queuine tRNA-ribosyltransferase accessory subunit 2 from Danio rerio (Zebrafish).